Here is a 503-residue protein sequence, read N- to C-terminus: Probable cytosol aminopeptidase (503 aa).

Residues K270 and D275 each contribute to the Mn(2+) site. The active site involves K282. Mn(2+)-binding residues include D293, D352, and E354. R356 is a catalytic residue.

The protein belongs to the peptidase M17 family. Mn(2+) serves as cofactor.

It localises to the cytoplasm. The enzyme catalyses Release of an N-terminal amino acid, Xaa-|-Yaa-, in which Xaa is preferably Leu, but may be other amino acids including Pro although not Arg or Lys, and Yaa may be Pro. Amino acid amides and methyl esters are also readily hydrolyzed, but rates on arylamides are exceedingly low.. The catalysed reaction is Release of an N-terminal amino acid, preferentially leucine, but not glutamic or aspartic acids.. Presumably involved in the processing and regular turnover of intracellular proteins. Catalyzes the removal of unsubstituted N-terminal amino acids from various peptides. This is Probable cytosol aminopeptidase from Edwardsiella ictaluri (strain 93-146).